A 390-amino-acid polypeptide reads, in one-letter code: MKKIALTALAVFSLAASAAYADVVKVGVIGPFSGPFALQGKNFKAGIDAYMAEHGNKVGDDTVEVVYRDVPQADPAQSKALAQELVVKEGVQYLAGFYFTPDAMAVTPILKQGNVPMVVMNAATSSIVTKSPYVVRTSFTTWQTSTPIARVALDKGVKKVISVVSDYGPGVDAENAFKAAFTDAGGEVVEAIRMPLATNDFSPIMQRIKDSGAQGVFAFLPSGPTTLGFMKAYVDNGLKSSGIQLFAPGDLTQESDLPALGENALGVLTTFHYAVSHDSPENRKFVEEARKAIGNPAELSFPSVGAYDGMHVIYKMIEATGGKKDAAKAVEAVKGMEWVSPRGPVSIDPESRHITQNIYLREVAKADDGTYYNKEIQTFEKQGDPGLKAQ.

The N-terminal stretch at 1–21 is a signal peptide; it reads MKKIALTALAVFSLAASAAYA.

The protein belongs to the leucine-binding protein family.

Component of an amino-acid transport system. This chain is Leu/Ile/Val-binding protein homolog 6, found in Brucella melitensis biotype 1 (strain ATCC 23456 / CCUG 17765 / NCTC 10094 / 16M).